A 396-amino-acid polypeptide reads, in one-letter code: Lysophospholipid transporter LplT (396 aa).

Residues 1–17 (MSESVHTNTSLWSKGMK) are Periplasmic-facing. A helical membrane pass occupies residues 18–38 (AVIVAQFLSAFGDNALLFATL). Topologically, residues 39 to 52 (ALLKAQFYPEWSQP) are cytoplasmic. A helical transmembrane segment spans residues 53-73 (ILQMVFVGAYILLAPFVGQVA). Residues 74-90 (DSFAKGRVMMFANGLKL) are Periplasmic-facing. Residues 91–111 (LGAASICFGINPFLGYTLVGV) traverse the membrane as a helical segment. At 112–144 (GAAAYSPAKYGILGELTTGSKLVKANGLMEASA) the chain is on the cytoplasmic side. The helical transmembrane segment at 145-165 (IAAILLGSVAGGVLADWHVLV) threads the bilayer. Residue alanine 166 is a topological domain, periplasmic. A helical membrane pass occupies residues 167-187 (LAACALAYGGAVVANIYIPKL). Residues 188–225 (AARPGQSWNLINMTRSFLNACTSLWCNGETRFSLVGAS) lie on the Cytoplasmic side of the membrane. A helical transmembrane segment spans residues 226 to 246 (LFWGAGVTLRFLLVLWVPVAL). At 247 to 255 (GITDNATPT) the chain is on the periplasmic side. A helical membrane pass occupies residues 256-276 (YLNAMVAIGIVVGAGAAAKLV). At 277 to 279 (TLE) the chain is on the cytoplasmic side. The chain crosses the membrane as a helical span at residues 280–300 (TVSRCMPAGILIGVVVLIFSL). Topologically, residues 301–303 (QHE) are periplasmic. A helical transmembrane segment spans residues 304 to 324 (LLPAYALLMLIGVLGGFFVVP). Over 325–342 (LNALLQERGKKSVGAGNA) the chain is Cytoplasmic. A helical membrane pass occupies residues 343-363 (IAVQNLGENSAMLLMLGIYSL). The Periplasmic portion of the chain corresponds to 364-365 (AV). Residues 366-386 (MVGIPVVPIGIGFGALFALAI) form a helical membrane-spanning segment. At 387-396 (TALWIWQRRH) the chain is on the cytoplasmic side.

The protein belongs to the major facilitator superfamily. LplT (TC 2.A.1.42) family.

It is found in the cell inner membrane. Catalyzes the facilitated diffusion of 2-acyl-glycero-3-phosphoethanolamine (2-acyl-GPE) into the cell. This chain is Lysophospholipid transporter LplT, found in Shigella flexneri serotype 5b (strain 8401).